We begin with the raw amino-acid sequence, 26 residues long: Orexigenic neuropeptide 26RFa (26 aa).

Phe-26 carries the post-translational modification Phenylalanine amide.

As to expression, brain.

The protein localises to the secreted. In terms of biological role, may have orexigenic activity. May promote aldosterone secretion by the adrenal gland. The sequence is that of Orexigenic neuropeptide 26RFa from Pelophylax lessonae (Pool frog).